The sequence spans 1941 residues: Xin actin-binding repeat-containing protein 1 (1941 aa).

The tract at residues 1 to 41 (MAEPQKSSKVAIKKMEDDLPPPPIPDSIQVIAPASQDPNPL) is disordered. Xin repeat units follow at residues 108–123 (GEVQSMRWIFENWALD), 143–158 (GDVKSTSLRFENQSVN), 176–191 (GDVHTARWLFETQPLD), 215–230 (GDVKGAKELFEAQSLD), 255–270 (GDVKKTIRLFQTEPLC), 293–308 (NAVRTARWLFETQPLD), 331–346 (PDVSGARWIFETQPLD), 368–383 (ADVTKQRLLFGTQALD), 402–417 (GDVKSTLWLFETQPME), 439–454 (GDVKQRKHVFETCPLG), 475–490 (GDVKSFKTLFETLPLD), 510–525 (GNVKANQILFETTPLY), 548–563 (GDVKKYKWMFETRPLD), 586–601 (GDVRTAKWLFETQPMD), 624–639 (GDVKTCRWLFETQPMH), 658–673 (ADVKSYTWMFETQPLD), 697–712 (VDVKTVRHLFETEPLG), 736–751 (GEVSRVKEFFEAKPLD), 769–784 (GSVHKFTWLFENYPMD), 805–820 (GDVGGKRFIFETYSLD), 842–857 (ANVKSCTMLFESQPLY), 880–895 (GDVKGARWLFETKPLD), 917–932 (GDVQAARWRFETEPLD), 951–966 (GDVQSNKQLFESQQVG), 982–997 (GDVRTSTWLFENQPVD), 1020–1035 (GDVKRCTWLFETQPMD), and 1055–1070 (ADVKSTTWLFESTPLD). Positions 1514 to 1565 (ASKQETKTLQSTIHQQESASTMRENTSTAIRTSTTRVQEASRTHTSVSQKSI) are enriched in polar residues. Disordered regions lie at residues 1514-1568 (ASKQ…IASH), 1715-1856 (ASGS…PPPA), and 1914-1941 (YKARKGGQGKFELDRAKPSKPVKNGEVG). Residues 1820 to 1833 (SASTNNSTNRSTKS) are compositionally biased toward low complexity. Pro residues predominate over residues 1834 to 1843 (VPPPVPPKPP).

It belongs to the Xin family. Expressed at intercalated disks in the heart (at protein level).

It is found in the cell junction. It localises to the adherens junction. The protein localises to the desmosome. In terms of biological role, involved in cardiac morphogenesis, including heart midline formation, cardiac tubule looping, myocardial formation and maintenance of heart beat speed and rhythm. May protect actin filaments from depolymerization. May play a role in development of normal skeletal muscle morphology, muscle fiber type composition and regulation of muscle satellite cell activation and survival. The polypeptide is Xin actin-binding repeat-containing protein 1 (Gallus gallus (Chicken)).